Here is a 400-residue protein sequence, read N- to C-terminus: tRNA (guanine-N(7)-)-methyltransferase (400 aa).

Residues Glu124, Glu149, and Asp176 each contribute to the S-adenosyl-L-methionine site. Asp232 contributes to the substrate binding site.

It belongs to the class I-like SAM-binding methyltransferase superfamily. TrmB family.

The enzyme catalyses guanosine(46) in tRNA + S-adenosyl-L-methionine = N(7)-methylguanosine(46) in tRNA + S-adenosyl-L-homocysteine. Its pathway is tRNA modification; N(7)-methylguanine-tRNA biosynthesis. Functionally, catalyzes the formation of N(7)-methylguanine at position 46 (m7G46) in tRNA. This is tRNA (guanine-N(7)-)-methyltransferase from Helicobacter pylori (strain J99 / ATCC 700824) (Campylobacter pylori J99).